A 319-amino-acid chain; its full sequence is Vomeronasal type-1 receptor 51 (319 aa).

At 1–31 the chain is on the extracellular side; sequence MNEILFFSPQPLFSHMMNENSRVHTHSNLRH. The chain crosses the membrane as a helical span at residues 32 to 52; sequence IFFSEIGIGISGNSFLLLFHI. At 53-65 the chain is on the cytoplasmic side; it reads LKFIHGHRSRLSD. A helical transmembrane segment spans residues 66-86; the sequence is LPIGLLSLIHLLMLLVMAFIA. Topologically, residues 87–109 are extracellular; it reads TDIFISWRGWDDIICKFLVYLYR. Residues cysteine 101 and cysteine 188 are joined by a disulfide bond. A helical transmembrane segment spans residues 110-130; sequence VLRGLSLCTTSMLSVLQAIIL. The Cytoplasmic segment spans residues 131-150; it reads SPRSSCLAKFKRKSLHHISC. The chain crosses the membrane as a helical span at residues 151–171; it reads AILFLSVLYMLIGSQLLVSII. The Extracellular portion of the chain corresponds to 172–203; the sequence is ATPNLTTNDFIYVTQSCSILPLSYVMQSMFST. Asparagine 175 carries an N-linked (GlcNAc...) asparagine glycan. Residues 204–224 traverse the membrane as a helical segment; it reads LLVIRDVFLISLMVLSTWYMV. Residues 225–254 lie on the Cytoplasmic side of the membrane; that stretch reads ALLCRHRKKTQHLQGISLSPKTSPKQRATQ. A helical membrane pass occupies residues 255–275; it reads TLLMLMSFFVLMTIYDTIVSC. Residues 276–285 are Extracellular-facing; sequence SRTMFLNDPT. Residues 286-306 traverse the membrane as a helical segment; the sequence is SYNMQIFVVHIYATVSPFVFM. Residues 307 to 319 are Cytoplasmic-facing; sequence STEKHIVNCLRSV.

The protein belongs to the G-protein coupled receptor 1 family. Expressed in a subset of sensory neurons located in the apical layer of the vomeronasal organ.

It localises to the cell membrane. In terms of biological role, putative pheromone receptor implicated in the regulation of social as well as reproductive behavior. This is Vomeronasal type-1 receptor 51 (Vmn1r51) from Mus musculus (Mouse).